Reading from the N-terminus, the 332-residue chain is Hygromycin-B 7''-O-kinase (332 aa).

Residue Asp223 is the Proton acceptor of the active site.

The protein belongs to the aminoglycoside phosphotransferase family.

It carries out the reaction hygromycin B + ATP = 7''-O-phosphohygromycin B + ADP + H(+). The aminoglycoside phosphotransferases achieve inactivation of their antibiotic substrates by phosphorylation. The protein is Hygromycin-B 7''-O-kinase (hyg) of Streptomyces hygroscopicus.